A 62-amino-acid polypeptide reads, in one-letter code: Small ribosomal subunit protein eS27 (62 aa).

Zn(2+) contacts are provided by Cys17, Cys20, Cys36, and Cys39. The segment at 17–39 (CPECNNEQIVFGSPATVVKCLTC) adopts a C4-type zinc-finger fold.

This sequence belongs to the eukaryotic ribosomal protein eS27 family. Part of the 30S ribosomal subunit. It depends on Zn(2+) as a cofactor.

The protein is Small ribosomal subunit protein eS27 of Methanocaldococcus jannaschii (strain ATCC 43067 / DSM 2661 / JAL-1 / JCM 10045 / NBRC 100440) (Methanococcus jannaschii).